A 511-amino-acid polypeptide reads, in one-letter code: Putative polyol transporter 1 (511 aa).

The next 12 helical transmembrane spans lie at 27–47 (FACA…IGVM), 63–83 (VQLE…SGAA), 94–114 (YTIV…GFAT), 124–144 (FVAG…TAEV), 151–171 (GFLT…GYVS), 186–206 (FMLG…LAMP), 284–304 (ILIA…DAVV), 324–344 (LATV…TCVV), 351–371 (ALLL…GTSL), 384–404 (WAIG…SIGA), 424–444 (GASL…MTFL), and 454–474 (GAFL…FTFL).

This sequence belongs to the major facilitator superfamily. Sugar transporter (TC 2.A.1.1) family.

The protein localises to the membrane. In terms of biological role, plasma membrane sugar-proton symporter. This Arabidopsis thaliana (Mouse-ear cress) protein is Putative polyol transporter 1 (PLT1).